Reading from the N-terminus, the 775-residue chain is Suppressor of glycerol defect protein 1 (775 aa).

Composition is skewed to basic residues over residues 1–11 and 28–49; these read MRPIKKSRSLK and RRGKRNHNLPHREKRKFARISR. Disordered regions lie at residues 1-101 and 152-253; these read MRPI…LLDP and IDDI…GGDK. Basic and acidic residues-rich tracts occupy residues 52–79, 177–193, and 209–223; these read NGYENRKITEEGDSKSSELNDDYLDAHR, TGDHGSVDELESEREGN, and DEFHQPETKPIRMDP. The MIF4G domain occupies 262–463; sequence RRKLQGSLNK…ESITNLKENK (202 aa). The region spanning 565–689 is the MI domain; the sequence is TLRTSIFVAL…PLTILKHVDF (125 aa).

Belongs to the CWC22 family.

It localises to the nucleus. It is found in the nucleolus. In terms of biological role, involved in osmoregulatory glycerol response. The protein is Suppressor of glycerol defect protein 1 (sgd1) of Schizosaccharomyces pombe (strain 972 / ATCC 24843) (Fission yeast).